The primary structure comprises 1023 residues: FHIP family protein AGAP011705 (1023 aa).

3 stretches are compositionally biased toward polar residues: residues 1-13 (MSWL…RQSF), 806-825 (SMTS…SSSY), and 868-888 (GLNH…ASMN). 2 disordered regions span residues 1–39 (MSWL…AGGG) and 797–927 (GKLL…AETQ). A compositionally biased stretch (low complexity) spans 889–906 (VPSPVGQQQHQHQSVSSV).

Belongs to the FHIP family.

This is FHIP family protein AGAP011705 from Anopheles gambiae (African malaria mosquito).